A 426-amino-acid chain; its full sequence is Trigger factor (426 aa).

Residues 165–239 (GDVYKLNEAG…ISEIKRLELP (75 aa)) form the PPIase FKBP-type domain.

It belongs to the FKBP-type PPIase family. Tig subfamily.

The protein localises to the cytoplasm. The catalysed reaction is [protein]-peptidylproline (omega=180) = [protein]-peptidylproline (omega=0). Its function is as follows. Involved in protein export. Acts as a chaperone by maintaining the newly synthesized protein in an open conformation. Functions as a peptidyl-prolyl cis-trans isomerase. The protein is Trigger factor of Pelodictyon phaeoclathratiforme (strain DSM 5477 / BU-1).